The sequence spans 144 residues: MTDIEIYRKRLERIEELLLELSEYSKKGAVIIVEGKRDILSMKRLGIDGNFELATRHSLFNFSERIAKLGCEVIILTDWDRRGDILATKLSEYFGNFGIKPELQIRNKLRLITQKEIKDVESLYTYVSKLRSKTGVSFDQEDNI.

Residues 28–109 form the Toprim domain; the sequence is GAVIIVEGKR…KPELQIRNKL (82 aa). 3 residues coordinate Mg(2+): Glu34, Asp78, and Asp80.

The protein belongs to the UPF0292 family. The cofactor is Mg(2+).

This is UPF0292 protein MA_4098 from Methanosarcina acetivorans (strain ATCC 35395 / DSM 2834 / JCM 12185 / C2A).